The sequence spans 475 residues: Aspartyl/glutamyl-tRNA(Asn/Gln) amidotransferase subunit B (475 aa).

It belongs to the GatB/GatE family. GatB subfamily. As to quaternary structure, heterotrimer of A, B and C subunits.

The catalysed reaction is L-glutamyl-tRNA(Gln) + L-glutamine + ATP + H2O = L-glutaminyl-tRNA(Gln) + L-glutamate + ADP + phosphate + H(+). It carries out the reaction L-aspartyl-tRNA(Asn) + L-glutamine + ATP + H2O = L-asparaginyl-tRNA(Asn) + L-glutamate + ADP + phosphate + 2 H(+). Allows the formation of correctly charged Asn-tRNA(Asn) or Gln-tRNA(Gln) through the transamidation of misacylated Asp-tRNA(Asn) or Glu-tRNA(Gln) in organisms which lack either or both of asparaginyl-tRNA or glutaminyl-tRNA synthetases. The reaction takes place in the presence of glutamine and ATP through an activated phospho-Asp-tRNA(Asn) or phospho-Glu-tRNA(Gln). This Staphylococcus aureus (strain bovine RF122 / ET3-1) protein is Aspartyl/glutamyl-tRNA(Asn/Gln) amidotransferase subunit B.